Here is a 226-residue protein sequence, read N- to C-terminus: Enolase-phosphatase E1 (226 aa).

This sequence belongs to the HAD-like hydrolase superfamily. MasA/MtnC family. Monomer. Mg(2+) is required as a cofactor.

The enzyme catalyses 5-methylsulfanyl-2,3-dioxopentyl phosphate + H2O = 1,2-dihydroxy-5-(methylsulfanyl)pent-1-en-3-one + phosphate. Its pathway is amino-acid biosynthesis; L-methionine biosynthesis via salvage pathway; L-methionine from S-methyl-5-thio-alpha-D-ribose 1-phosphate: step 3/6. The protein operates within amino-acid biosynthesis; L-methionine biosynthesis via salvage pathway; L-methionine from S-methyl-5-thio-alpha-D-ribose 1-phosphate: step 4/6. Bifunctional enzyme that catalyzes the enolization of 2,3-diketo-5-methylthiopentyl-1-phosphate (DK-MTP-1-P) into the intermediate 2-hydroxy-3-keto-5-methylthiopentenyl-1-phosphate (HK-MTPenyl-1-P), which is then dephosphorylated to form the acireductone 1,2-dihydroxy-3-keto-5-methylthiopentene (DHK-MTPene). In Shewanella frigidimarina (strain NCIMB 400), this protein is Enolase-phosphatase E1.